An 806-amino-acid polypeptide reads, in one-letter code: MWGRFLAPEAGGRDSPSGARSFPAGSDYSSAWLPGNESLWQATAVPSNHRNNHLRRHSITSDSGDTGIGTSCSDSVEDHSTSSGTLSFKPSRSLVTLPTAHVMPSNSSASVSKHRESLTPDGSKWSTSLMQTLGDHSRGERDSSLDMKDFRPLRKWSSLSKLTAPDTRNHSGIAYPQELRNSLEMTGKGKPFMSHLRTFGPSCLHDSMELLKLEDKEINKKRSSTLDCKYKFESCNKEDVRVSSSALRRQTLDMTYSALPESKPIVTGSETFESPKYLMLGQQAVGGVPIQPSVRTQMWLTEQLRTNPLEGRTTDDSYSLAPWQQPQTEEFQQGSETPMQVLTGSSRQSYSPPGFQDFSKWESVLKIKEGLLRQKEIVIDRQKQQINHLHERIRDNELRAQHAMLGHYVNCEDSYVSNLQPQYESSSGQSLFTEQPLSHPHQEELEQKLASTEKEVLQLNEFLKQRISQFSEEKKKLEEKLKTRDRYISSLKKKCQKESEQNKEKQRRIETLEKYLADLPTLDDVQSQSLQLQVLEEKNKNLQETLIDTEKQLEEIKKQCQDKEVQLLCQKKKEKELVTSVQSLQQKVEKCLEDGIRLPMLDAKQLQSENDNLREQNATASKIIESQQDEINRMILEIQSMQGKLCEEKLTARSTVEELGRKEGSLQRLTEALLENQRQMGETYSLLDQGHEAEQSRPQTIHSKWPLFDLTVIDQLFKEMSYCLFDLKALCSILNQRAQGKEPNLSLLLGIRSMNCSAEETENDHSPETLTKKLSDVCQLRRDIDELRTTISDRYAQDMGDNCVTQ.

Disordered regions lie at residues 1–27 (MWGR…AGSD), 51–89 (NNHL…LSFK), and 101–146 (HVMP…SSLD). Phosphoserine is present on serine 15. A compositionally biased stretch (polar residues) spans 60-74 (TSDSGDTGIGTSCSD). Basic and acidic residues predominate over residues 135-146 (DHSRGERDSSLD). At serine 207 the chain carries Phosphoserine. The interval 308–353 (PLEGRTTDDSYSLAPWQQPQTEEFQQGSETPMQVLTGSSRQSYSPP) is disordered. The span at 322-351 (PWQQPQTEEFQQGSETPMQVLTGSSRQSYS) shows a compositional bias: polar residues. A coiled-coil region spans residues 442-644 (QEELEQKLAS…ILEIQSMQGK (203 aa)).

It belongs to the CEP85 family.

It is found in the cytoplasm. The protein localises to the cytoskeleton. It localises to the microtubule organizing center. Its subcellular location is the centrosome. Functionally, plays an essential role in neuronal cell migration. The polypeptide is Centrosomal protein of 85 kDa-like (Mus musculus (Mouse)).